Consider the following 501-residue polypeptide: Cell division control protein 24 (501 aa).

In terms of assembly, interacts with dna2, pcn1 and rfc1.

It is found in the nucleus. The protein localises to the cytoplasm. Functionally, has a role in the progression of DNA replication and in the maintenance of genomic integrity. Acts during S phase, after initiation, where it is essential for completion. The sequence is that of Cell division control protein 24 (cdc24) from Schizosaccharomyces pombe (strain 972 / ATCC 24843) (Fission yeast).